Reading from the N-terminus, the 88-residue chain is Small ribosomal subunit protein bS20 (88 aa).

This sequence belongs to the bacterial ribosomal protein bS20 family.

Binds directly to 16S ribosomal RNA. The sequence is that of Small ribosomal subunit protein bS20 from Methylorubrum extorquens (strain CM4 / NCIMB 13688) (Methylobacterium extorquens).